The sequence spans 78 residues: Small ribosomal subunit protein uS15c (78 aa).

It belongs to the universal ribosomal protein uS15 family. Part of the 30S ribosomal subunit.

The protein localises to the plastid. Its subcellular location is the chloroplast. This is Small ribosomal subunit protein uS15c (rps15-A) from Saccharum officinarum (Sugarcane).